The primary structure comprises 170 residues: Methanogen homoaconitase small subunit (170 aa).

The short motif at 26-29 (YLRT) is the YLRT element.

Belongs to the LeuD family. LeuD type 2 subfamily. In terms of assembly, heterotetramer of 2 HacA and 2 HacB proteins.

The catalysed reaction is (2R)-homocitrate = (2R,3S)-homoisocitrate. It carries out the reaction (2R)-homocitrate = cis-homoaconitate + H2O. The enzyme catalyses (2R,3S)-homoisocitrate = cis-homoaconitate + H2O. It catalyses the reaction cis-(homo)2aconitate + H2O = (2R,3S)-iso(homo)2citrate. The catalysed reaction is cis-(homo)3aconitate + H2O = (2R,3S)-iso(homo)3citrate. It participates in organic acid metabolism; 2-oxosuberate biosynthesis. Component of a hydro-lyase with broad substrate specificity for cis-unsaturated tricarboxylic acids. Catalyzes both the reversible dehydration of (R)-homocitrate ((R)-2-hydroxybutane-1,2,4-tricarboxylate) to produce cis-homoaconitate ((Z)-but-1-ene-1,2,4-tricarboxylate), and its hydration to homoisocitrate ((1R,2S)-1-hydroxybutane-1,2,4-tricarboxylate). Is also able to hydrate the analogous longer chain substrates cis-homo(2)-aconitate, cis-homo(3)-aconitate. These reactions are part of the biosynthesis pathway of coenzyme B. This Methanothermobacter thermautotrophicus (strain ATCC 29096 / DSM 1053 / JCM 10044 / NBRC 100330 / Delta H) (Methanobacterium thermoautotrophicum) protein is Methanogen homoaconitase small subunit (hacB).